A 768-amino-acid polypeptide reads, in one-letter code: cGMP-dependent protein kinase, isozyme 1 (768 aa).

The regulatory stretch occupies residues 1–192 (MAAGMLTDRE…NDFLKNIDAS (192 aa)). Residues 114-127 (PLASTSSASPSGRT) show a composition bias toward low complexity. The segment at 114–134 (PLASTSSASPSGRTSADEVRP) is disordered. Residues 249-252 (GELA), 259-260 (RT), Arg366, 375-378 (GEQA), 385-386 (RT), and Tyr421 contribute to the 3',5'-cyclic GMP site. One can recognise a Protein kinase domain in the interval 457–717 (LEVVSTLGIG…IQDIKKHKWF (261 aa)). Residues 463–471 (LGIGGFGRV) and Lys488 each bind ATP. Asp582 functions as the Proton acceptor in the catalytic mechanism. Residues 718–768 (LGFDWDGLASQLLIPPFVRPIAHPTDVRYFDRFPCDLNEPPDELSGWDADF) enclose the AGC-kinase C-terminal domain.

Belongs to the protein kinase superfamily. AGC Ser/Thr protein kinase family. cGMP subfamily. Homodimer. Mg(2+) is required as a cofactor. Autophosphorylated. As to expression, in embryo stage 13, expression is seen in a few large, irregular cells having the appearance of hemocytes or macrophages. In adults, expression is seen in optic lamina and weakly in testis.

The catalysed reaction is L-seryl-[protein] + ATP = O-phospho-L-seryl-[protein] + ADP + H(+). It catalyses the reaction L-threonyl-[protein] + ATP = O-phospho-L-threonyl-[protein] + ADP + H(+). With respect to regulation, binding of cGMP results in enzyme activation. This chain is cGMP-dependent protein kinase, isozyme 1 (Pkg21D), found in Drosophila melanogaster (Fruit fly).